Reading from the N-terminus, the 273-residue chain is Bis(5'-nucleosyl)-tetraphosphatase, symmetrical (273 aa).

Belongs to the Ap4A hydrolase family.

The enzyme catalyses P(1),P(4)-bis(5'-adenosyl) tetraphosphate + H2O = 2 ADP + 2 H(+). Its function is as follows. Hydrolyzes diadenosine 5',5'''-P1,P4-tetraphosphate to yield ADP. This chain is Bis(5'-nucleosyl)-tetraphosphatase, symmetrical, found in Aeromonas hydrophila subsp. hydrophila (strain ATCC 7966 / DSM 30187 / BCRC 13018 / CCUG 14551 / JCM 1027 / KCTC 2358 / NCIMB 9240 / NCTC 8049).